A 534-amino-acid polypeptide reads, in one-letter code: NAD(P)H-quinone oxidoreductase chain 4 2 (534 aa).

Helical transmembrane passes span 9–29, 51–71, 106–126, 130–150, 152–172, 184–204, 227–247, 258–278, 290–310, 326–346, 347–367, 399–419, 432–452, and 479–499; these read FPWL…IPLI, WFAL…FYVG, LILL…PVTL, LFYF…AVQD, LLFF…LSIW, FILY…AMAF, LLMY…FPLH, TAPV…YALM, LYFA…AALT, ISHM…GMSG, AMLQ…LVGA, LASL…VFIG, LVVV…LLSM, and VFII…PKLV.

This sequence belongs to the complex I subunit 4 family.

Its subcellular location is the cellular thylakoid membrane. It carries out the reaction a plastoquinone + NADH + (n+1) H(+)(in) = a plastoquinol + NAD(+) + n H(+)(out). The catalysed reaction is a plastoquinone + NADPH + (n+1) H(+)(in) = a plastoquinol + NADP(+) + n H(+)(out). Functionally, NDH-1 shuttles electrons from NAD(P)H, via FMN and iron-sulfur (Fe-S) centers, to quinones in the respiratory chain. The immediate electron acceptor for the enzyme in this species is believed to be plastoquinone. Couples the redox reaction to proton translocation (for every two electrons transferred, four hydrogen ions are translocated across the cytoplasmic membrane), and thus conserves the redox energy in a proton gradient. This chain is NAD(P)H-quinone oxidoreductase chain 4 2, found in Synechococcus sp. (strain JA-2-3B'a(2-13)) (Cyanobacteria bacterium Yellowstone B-Prime).